The following is a 343-amino-acid chain: MKQVLLKAWRARGWLARLLWPVAQLHGLLVRLRRALYRRGMLSSERFKVPVIVVGNVVAGGAGKTPLVMALVKHFQAQGLRVGVVSRGYGRSGHESLEVRPGTPVDESGDEPALIQHATGAPVFVAQRRTQALRDLLAAYPATAVVVCDDGLQHYALQRDIEIAVFDDRGVGNGWLLPAGPLREPWPERLRQGVDLVLHTGQQPAFEGYTSRRQLADHAVAADGSSLALTALAHQPVVALAGIASPEAFFDMLRARGLTLQKTLALPDHHDFKTGDLNALAGRTVLCTEKDAVKLFALPDHSKIKLLAVPLEFSPEPAFFTALDGLLTPLLSQLPSSHGHQTT.

Residue 58-65 (VAGGAGKT) participates in ATP binding.

Belongs to the LpxK family.

It catalyses the reaction a lipid A disaccharide + ATP = a lipid IVA + ADP + H(+). It functions in the pathway glycolipid biosynthesis; lipid IV(A) biosynthesis; lipid IV(A) from (3R)-3-hydroxytetradecanoyl-[acyl-carrier-protein] and UDP-N-acetyl-alpha-D-glucosamine: step 6/6. Its function is as follows. Transfers the gamma-phosphate of ATP to the 4'-position of a tetraacyldisaccharide 1-phosphate intermediate (termed DS-1-P) to form tetraacyldisaccharide 1,4'-bis-phosphate (lipid IVA). The chain is Tetraacyldisaccharide 4'-kinase from Polaromonas naphthalenivorans (strain CJ2).